A 441-amino-acid chain; its full sequence is N-acetylmuramyl-L-alanine amidase (441 aa).

The signal sequence occupies residues 1-25; that stretch reads MKTKTLFIFSAILTLSIFAPNETFA.

The protein belongs to the peptidase S12 family.

It catalyses the reaction Hydrolyzes the link between N-acetylmuramoyl residues and L-amino acid residues in certain cell-wall glycopeptides.. The protein operates within cell wall biogenesis; peptidoglycan recycling. In terms of biological role, involved in muropeptide recycling. Hydrolyzes the amide bond between N-acetylmuramic acid (MurNAc) and the L-alanine residue of the stem peptide. Cannot hydrolyze muropeptides containing N-acetylglucosamine (GlcNAc) at the non-reducing end. In Bacillus subtilis (strain 168), this protein is N-acetylmuramyl-L-alanine amidase.